The chain runs to 182 residues: MKNIFLDLDNTLICAEPFEDITDLGRFKERASHFDFKNMEDYYLICGRPYLQPFLDYLFKNFNVHIWTAASKGYASFIIEEFILKKDPSRKINLVLFDHHCRVSKRVYKKEKASKKLEMLWTIWKLQEFDKENTFIIDDLEEVKESQVKNCFSVKPFFFMENDSEYDQELMRLKDVLNRHLN.

The FCP1 homology domain maps to 1–180 (MKNIFLDLDN…MRLKDVLNRH (180 aa)).

The protein belongs to the IIV-6 355R family.

May function as a phosphatase. This Invertebrate iridescent virus 6 (IIV-6) protein is Putative CTD phosphatase-like protein 355R.